Here is a 542-residue protein sequence, read N- to C-terminus: CTP synthase (542 aa).

The amidoligase domain stretch occupies residues 1–265 (MARYVFITGG…DSEVLSAFGI (265 aa)). Serine 13 contributes to the CTP binding site. Residue serine 13 coordinates UTP. Residue 14–19 (SLGKGI) participates in ATP binding. Tyrosine 54 is an L-glutamine binding site. Residue aspartate 71 participates in ATP binding. Mg(2+) is bound by residues aspartate 71 and glutamate 139. Residues 146–148 (DIE), 186–191 (KTKPTQ), and lysine 222 each bind CTP. UTP contacts are provided by residues 186–191 (KTKPTQ) and lysine 222. Positions 291 to 541 (TIAIVGKYTG…IEAAIEQSRL (251 aa)) constitute a Glutamine amidotransferase type-1 domain. Glycine 353 serves as a coordination point for L-glutamine. The Nucleophile; for glutamine hydrolysis role is filled by cysteine 380. L-glutamine-binding positions include 381–384 (FGMQ), glutamate 404, and arginine 469. Catalysis depends on residues histidine 514 and glutamate 516.

Belongs to the CTP synthase family. As to quaternary structure, homotetramer.

It carries out the reaction UTP + L-glutamine + ATP + H2O = CTP + L-glutamate + ADP + phosphate + 2 H(+). It catalyses the reaction L-glutamine + H2O = L-glutamate + NH4(+). The enzyme catalyses UTP + NH4(+) + ATP = CTP + ADP + phosphate + 2 H(+). The protein operates within pyrimidine metabolism; CTP biosynthesis via de novo pathway; CTP from UDP: step 2/2. Allosterically activated by GTP, when glutamine is the substrate; GTP has no effect on the reaction when ammonia is the substrate. The allosteric effector GTP functions by stabilizing the protein conformation that binds the tetrahedral intermediate(s) formed during glutamine hydrolysis. Inhibited by the product CTP, via allosteric rather than competitive inhibition. Catalyzes the ATP-dependent amination of UTP to CTP with either L-glutamine or ammonia as the source of nitrogen. Regulates intracellular CTP levels through interactions with the four ribonucleotide triphosphates. The sequence is that of CTP synthase from Brucella anthropi (strain ATCC 49188 / DSM 6882 / CCUG 24695 / JCM 21032 / LMG 3331 / NBRC 15819 / NCTC 12168 / Alc 37) (Ochrobactrum anthropi).